Reading from the N-terminus, the 218-residue chain is Flagellar calcium-binding protein TB-24 (218 aa).

Residues 1 to 27 are disordered; it reads MGCSASKDTTNSKDGAASKGGKDGKTT. 4 EF-hand domains span residues 48 to 83, 84 to 119, 130 to 165, and 167 to 202; these read ESKS…ILKL, DEFT…LVEF, YDIF…LKEW, and VDIT…KKLQ. The Ca(2+) site is built by D61, N63, T65, K67, and E72. Ca(2+)-binding residues include D143, D145, S147, E154, D180, N182, S184, and E191.

The protein belongs to the calflagin family.

Its subcellular location is the cell projection. It is found in the cilium. It localises to the flagellum. May contribute to the rapid motility of the trypanosomes, playing a role either in flagellar structure or in calcium metabolism. Could alternate between a GDP-bound inactive form to a calcium/GTP-bound active form. The chain is Flagellar calcium-binding protein TB-24 from Trypanosoma brucei brucei.